A 231-amino-acid polypeptide reads, in one-letter code: Thrombin-like enzyme leucurobin (231 aa).

The region spanning 1–223 (VIGGDECDIN…YLPWIQSIIA (223 aa)) is the Peptidase S1 domain. 6 disulfides stabilise this stretch: Cys7/Cys139, Cys26/Cys42, Cys74/Cys230, Cys118/Cys184, Cys150/Cys163, and Cys174/Cys199. Residues His41 and Asp86 each act as charge relay system in the active site. Residue Asn146 is glycosylated (N-linked (GlcNAc...) asparagine). Ser178 acts as the Charge relay system in catalysis. An N-linked (GlcNAc...) asparagine glycan is attached at Asn225.

It belongs to the peptidase S1 family. Snake venom subfamily. As to quaternary structure, monomer. Glycosylated. In terms of tissue distribution, expressed by the venom gland.

The protein resides in the secreted. It catalyses the reaction Selective cleavage of Arg-|-Xaa bond in fibrinogen, to form fibrin, and release fibrinopeptide A. The specificity of further degradation of fibrinogen varies with species origin of the enzyme.. Inhibited by PMSF and benzamidine. Its clotting effect is strongly inhibited by antibothropic serum. Is not inhibited by heparin. In terms of biological role, thrombin-like snake venom serine protease that cleaves Arg-Gly bonds in alpha-chain of fibrinogen (FGA). Induces temporary episodes of opisthotonos and rapid rolling around the long axis of the animal (gyroxin-like effect), when injected into the tail veins of mice (0.143 ug/g mouse). The sequence is that of Thrombin-like enzyme leucurobin from Bothrops leucurus (Whitetail lancehead).